Consider the following 115-residue polypeptide: Large ribosomal subunit protein uL24 (115 aa).

This sequence belongs to the universal ribosomal protein uL24 family. As to quaternary structure, part of the 50S ribosomal subunit.

Its function is as follows. One of two assembly initiator proteins, it binds directly to the 5'-end of the 23S rRNA, where it nucleates assembly of the 50S subunit. One of the proteins that surrounds the polypeptide exit tunnel on the outside of the subunit. The protein is Large ribosomal subunit protein uL24 of Phytoplasma mali (strain AT).